Here is a 246-residue protein sequence, read N- to C-terminus: Probable transcriptional regulatory protein YebC (246 aa).

Residues 1–20 are disordered; that stretch reads MAGHSKWANTRHRKAAQDAK.

The protein belongs to the TACO1 family.

Its subcellular location is the cytoplasm. The sequence is that of Probable transcriptional regulatory protein YebC from Salmonella choleraesuis (strain SC-B67).